Consider the following 156-residue polypeptide: Putative pre-16S rRNA nuclease (156 aa).

The protein belongs to the YqgF nuclease family.

It localises to the cytoplasm. Its function is as follows. Could be a nuclease involved in processing of the 5'-end of pre-16S rRNA. The chain is Putative pre-16S rRNA nuclease from Ehrlichia canis (strain Jake).